Consider the following 519-residue polypeptide: Chaperone SurA (519 aa).

Positions 1 to 31 (MMRSLHSLRRMSGTVLALMLAAGLPLSAAQA) are cleaved as a signal peptide. Composition is skewed to low complexity over residues 31-45 (AQPA…QKPA) and 197-207 (PAAAQATRAPA). Disordered regions lie at residues 31 to 50 (AQPA…PAPS) and 196 to 221 (NPAA…PAQS). The PpiC 1 domain occupies 223-324 (PAMLVLAQIL…NGFHILKVVD (102 aa)). Positions 328–361 (GGQPAQAARPAPAPAPQQPSSFQEGPSVAAPQGP) are disordered. The 100-residue stretch at 364 to 463 (VTQTHARHIL…FGWHLIQVLE (100 aa)) folds into the PpiC 2 domain.

It is found in the periplasm. The catalysed reaction is [protein]-peptidylproline (omega=180) = [protein]-peptidylproline (omega=0). Chaperone involved in the correct folding and assembly of outer membrane proteins. Recognizes specific patterns of aromatic residues and the orientation of their side chains, which are found more frequently in integral outer membrane proteins. May act in both early periplasmic and late outer membrane-associated steps of protein maturation. The protein is Chaperone SurA of Bordetella bronchiseptica (strain ATCC BAA-588 / NCTC 13252 / RB50) (Alcaligenes bronchisepticus).